Consider the following 453-residue polypeptide: MSDIEIIEEIQPVSLKRKQPSTSFNGKRKRTSSGLIEKSETMKGTETEFEKFVIDRTITPQRKLNAEDVEKSGEDIGSSEWRKRLECTLLGSVSTPVTVKKENNIRKKISCFNCDGEHNLRDCTQRKDFRRISRKKRESGDGRQRVFYNDVGISKQREKHFKPGVISDRLRAALGLRGNDIPEHIYRMRRLGLIDGYPPGWLRKSIKSTDQLKFFDSTSKEDDEMSVKPPELDTSKIVWYPGFNGEQSSLNDREDFKIPPRDVFCSVYQDELLKIFKKSEKAEKRRAKSTPKHKKFANEDDDDVIVITSDEIKIDKFNTPGEEDSIIILDGSASTEEKHLLTPIRKDVKLGESMFELIGTPVFGSSLLTPVAPLEAFAVGIQPFEAREELTGCKGNFRNLMDKLKEIRENNFVPEPEEEVILVSTNEISSSNNSGTAKNKNNQNRKRNRRHAK.

Disordered stretches follow at residues 15 to 42 (LKRK…SETM) and 425 to 453 (TNEI…RHAK). Positions 425–437 (TNEISSSNNSGTA) are enriched in polar residues. The span at 443–453 (QNRKRNRRHAK) shows a compositional bias: basic residues.

This is an uncharacterized protein from Caenorhabditis elegans.